The primary structure comprises 477 residues: MTATPQASARPERPFATVNPYTGETVKTFPFLESAEIPALIERADQAYREWGQRPVTERAAIMRRAAELMLERTDELASLITLEMGKLLREAKGEVALAASILNYYGEQGPSFLEPKTIPVPQGEAAVLHAPLGVLLGIEPWNYPLYQVVRFAAPNLVVGNTVLLKHSELCPQSALALEQLFHDAGVPQGAYTNLFLRIADIEQVIAHPAVQGVSLTGSERAGASVAELAGRHLKKCVLELGGSDPFIVLDAEDLDTTVKAAATGRLSNTGQACIAAKRLMVVDDLYDEFVSRLGQTFSAFVPGDPADPSTRLGPLSSEQAARDLQAQVQDAIDKGATVVAGGQRPEHPGAFVQPTVLTDVTPDMRAYHEELFGPVAVVYRVRDEDEAVALANASTYGLGGAVFSSDLDRAQRVAERLDTGMVWINHPTSSAADLPFGGVKRSGFGRELSSMGMLEFTNQKLVRAFPTKQKPAQVAG.

Residues 142 to 143, 166 to 169, and 218 to 219 contribute to the NADP(+) site; these read WN, KHSE, and GS. The active-site Proton acceptor is the Glu240. Leu241 serves as a coordination point for NADP(+). Cys274 acts as the Nucleophile in catalysis. An NADP(+)-binding site is contributed by Glu371.

This sequence belongs to the aldehyde dehydrogenase family.

It carries out the reaction succinate semialdehyde + NADP(+) + H2O = succinate + NADPH + 2 H(+). The protein operates within amino-acid degradation; 4-aminobutanoate degradation. Functionally, catalyzes the NADP(+) dependent oxidation of succinate semialdehyde to succinate. In Deinococcus radiodurans (strain ATCC 13939 / DSM 20539 / JCM 16871 / CCUG 27074 / LMG 4051 / NBRC 15346 / NCIMB 9279 / VKM B-1422 / R1), this protein is Succinate-semialdehyde dehydrogenase [NADP(+)] (ssdA).